We begin with the raw amino-acid sequence, 227 residues long: UPF0173 metal-dependent hydrolase DR_0006 (227 aa).

It belongs to the UPF0173 family.

The chain is UPF0173 metal-dependent hydrolase DR_0006 from Deinococcus radiodurans (strain ATCC 13939 / DSM 20539 / JCM 16871 / CCUG 27074 / LMG 4051 / NBRC 15346 / NCIMB 9279 / VKM B-1422 / R1).